Consider the following 763-residue polypeptide: Cyclin-F (763 aa).

Positions 19–27 (KRRVKRRPR) match the Nuclear localization signal 1 motif. The F-box domain maps to 28–75 (VLTLLSLPEDVLLYVLECLPAVDILSMREVHPHLRSLVDSHSSVWARA). The Cyclin N-terminal domain maps to 299–411 (INKTSIFTTQ…EIISALEGKI (113 aa)). 2 consecutive short sequence motifs (d box) follow at residues 316–319 (RYIL) and 355–358 (RAKL). Disordered regions lie at residues 574 to 600 (GSKT…TAEL) and 677 to 763 (KLEN…SDEL). Positions 575-581 (SKTKRRR) match the Nuclear localization signal 2 motif. A compositionally biased stretch (basic and acidic residues) spans 580–590 (RREDSIQEDRG). The PEST stretch occupies residues 589–747 (RGSFVTTPTA…LFKASRRQVK (159 aa)). The span at 692-710 (SSGYSSVSSGGSPTSSSSP) shows a compositional bias: low complexity. A compositionally biased stretch (basic residues) spans 741–751 (ASRRQVKRKNQ).

The protein belongs to the cyclin family. Cyclin AB subfamily. As to quaternary structure, component of the SCF(CCNF) complex.

It is found in the nucleus. Its subcellular location is the cytoplasm. It localises to the perinuclear region. The protein localises to the cytoskeleton. The protein resides in the microtubule organizing center. It is found in the centrosome. Its subcellular location is the centriole. In terms of biological role, substrate recognition component of the SCF(CCNF) E3 ubiquitin-protein ligase complex which mediates the ubiquitination and subsequent proteasomal degradation of target proteins. The SCF(CCNF) E3 ubiquitin-protein ligase complex is an integral component of the ubiquitin proteasome system (UPS) and links proteasome degradation to the cell cycle. Mediates the substrate recognition and the proteasomal degradation of various target proteins during G2 phase involved in the regulation of cell cycle progression and in the maintenance of genome stability. The polypeptide is Cyclin-F (ccnf) (Xenopus tropicalis (Western clawed frog)).